A 487-amino-acid chain; its full sequence is 3-octaprenyl-4-hydroxybenzoate carboxy-lyase (487 aa).

Asn172 lines the Mn(2+) pocket. Prenylated FMN contacts are provided by residues 175 to 177, 189 to 191, and 194 to 195; these read IYR, RWL, and RG. Glu238 is a binding site for Mn(2+). Asp287 serves as the catalytic Proton donor.

It belongs to the UbiD family. In terms of assembly, homohexamer. Prenylated FMN is required as a cofactor. It depends on Mn(2+) as a cofactor.

It localises to the cell membrane. It carries out the reaction a 4-hydroxy-3-(all-trans-polyprenyl)benzoate + H(+) = a 2-(all-trans-polyprenyl)phenol + CO2. It functions in the pathway cofactor biosynthesis; ubiquinone biosynthesis. Functionally, catalyzes the decarboxylation of 3-octaprenyl-4-hydroxy benzoate to 2-octaprenylphenol, an intermediate step in ubiquinone biosynthesis. The protein is 3-octaprenyl-4-hydroxybenzoate carboxy-lyase of Blochmanniella pennsylvanica (strain BPEN).